Reading from the N-terminus, the 645-residue chain is Translation factor GUF1, mitochondrial (645 aa).

Residues 44 to 228 form the tr-type G domain; sequence ENYRNFSIVA…AIIDRIPPPT (185 aa). Residues 53 to 60, 120 to 124, and 174 to 177 contribute to the GTP site; these read AHVDHGKS, DTPGH, and NKID.

This sequence belongs to the TRAFAC class translation factor GTPase superfamily. Classic translation factor GTPase family. LepA subfamily.

The protein localises to the mitochondrion inner membrane. The catalysed reaction is GTP + H2O = GDP + phosphate + H(+). Functionally, promotes mitochondrial protein synthesis. May act as a fidelity factor of the translation reaction, by catalyzing a one-codon backward translocation of tRNAs on improperly translocated ribosomes. Binds to mitochondrial ribosomes in a GTP-dependent manner. The polypeptide is Translation factor GUF1, mitochondrial (Saccharomyces cerevisiae (strain RM11-1a) (Baker's yeast)).